The following is a 162-amino-acid chain: Probable chemoreceptor glutamine deamidase CheD (162 aa).

It belongs to the CheD family.

It catalyses the reaction L-glutaminyl-[protein] + H2O = L-glutamyl-[protein] + NH4(+). Its function is as follows. Probably deamidates glutamine residues to glutamate on methyl-accepting chemotaxis receptors (MCPs), playing an important role in chemotaxis. In Pyrococcus horikoshii (strain ATCC 700860 / DSM 12428 / JCM 9974 / NBRC 100139 / OT-3), this protein is Probable chemoreceptor glutamine deamidase CheD.